Consider the following 177-residue polypeptide: TRAF-interacting protein with FHA domain-containing protein A (177 aa).

The region spanning 48–104 (VAFGRDYNVCRYPLLSNRVSRIQFNLQFFKHFNCSTTAIEIKNLSKKNKLYVDNLEL) is the FHA domain.

It belongs to the TIFA family. In terms of assembly, interacts with traf6.

The protein resides in the cytoplasm. Its function is as follows. Adapter molecule that plays a key role in the activation of pro-inflammatory NF-kappa-B signaling following detection of bacterial pathogen-associated molecular pattern metabolites (PAMPs). Promotes activation of an innate immune response by inducing the oligomerization and polyubiquitination of TRAF6, which leads to the activation of TAK1 and IKK through a proteasome-independent mechanism. The sequence is that of TRAF-interacting protein with FHA domain-containing protein A from Xenopus tropicalis (Western clawed frog).